Here is a 239-residue protein sequence, read N- to C-terminus: Ribonuclease HII (239 aa).

The RNase H type-2 domain maps to 18 to 231 (KIIVGLDEAG…SKNLLKEIEE (214 aa)). A divalent metal cation-binding residues include D24, E25, and D125.

This sequence belongs to the RNase HII family. The cofactor is Mn(2+). Requires Mg(2+) as cofactor.

The protein localises to the cytoplasm. It carries out the reaction Endonucleolytic cleavage to 5'-phosphomonoester.. In terms of biological role, endonuclease that specifically degrades the RNA of RNA-DNA hybrids. The protein is Ribonuclease HII of Methanococcus maripaludis (strain C7 / ATCC BAA-1331).